The sequence spans 445 residues: Glutamate-1-semialdehyde 2,1-aminomutase (445 aa).

N6-(pyridoxal phosphate)lysine is present on K263.

The protein belongs to the class-III pyridoxal-phosphate-dependent aminotransferase family. HemL subfamily. The cofactor is pyridoxal 5'-phosphate.

The protein resides in the cytoplasm. It carries out the reaction (S)-4-amino-5-oxopentanoate = 5-aminolevulinate. The protein operates within porphyrin-containing compound metabolism; protoporphyrin-IX biosynthesis; 5-aminolevulinate from L-glutamyl-tRNA(Glu): step 2/2. The protein is Glutamate-1-semialdehyde 2,1-aminomutase of Halorubrum lacusprofundi (strain ATCC 49239 / DSM 5036 / JCM 8891 / ACAM 34).